We begin with the raw amino-acid sequence, 1096 residues long: Lysine-specific demethylase PHF2 (1096 aa).

A PHD-type zinc finger spans residues 5 to 56 (PVYCVCRLPYDVTRFMIECDACKDWFHGSCVGVEEEEAPDIDIYHCPNCEKT). Residues threonine 193 and threonine 246 each contribute to the 2-oxoglutarate site. In terms of domain architecture, JmjC spans 197 to 353 (FSDTRMSSFV…MQMRAYEVER (157 aa)). Histidine 249 and aspartate 251 together coordinate Fe cation. 2-oxoglutarate is bound by residues tyrosine 259 and lysine 266. Residue tyrosine 321 coordinates Fe cation. 2-oxoglutarate is bound at residue threonine 323. Residues 448-630 (TVRPEVNAAA…KSPLAGNKDK (183 aa)) form a disordered region. Serine 474 is modified (phosphoserine). A Phosphothreonine modification is found at threonine 479. Over residues 503–515 (SKIPKPPKSPKPP) the composition is skewed to pro residues. The residue at position 536 (serine 536) is a Phosphoserine. 2 stretches are compositionally biased toward basic and acidic residues: residues 545–560 (LEAHTKEALTKMEPPK) and 575–630 (DTVH…NKDK). 3 positions are modified to phosphoserine: serine 651, serine 677, and serine 701. Lysine 707 participates in a covalent cross-link: Glycyl lysine isopeptide (Lys-Gly) (interchain with G-Cter in SUMO2). Lysine 716 is subject to N6-acetyllysine. 3 disordered regions span residues 719–755 (LDSAVYKSDDSSDEGSLHIDTDTKPGRNAKVKKESGS), 811–841 (WGTGQAKGGSLAAHGARKIGGGNKGTGKRLL), and 871–1080 (YPSL…TAKQ). Tyrosine 724 is modified (phosphotyrosine). Over residues 725–753 (KSDDSSDEGSLHIDTDTKPGRNAKVKKES) the composition is skewed to basic and acidic residues. A phosphoserine mark is found at serine 726, serine 729, serine 730, and serine 734. Phosphoserine is present on residues serine 873, serine 876, and serine 893. Residues 910-919 (RQDRPVREGT) are compositionally biased toward basic and acidic residues. Over residues 943–953 (NRKKKNTKRKP) the composition is skewed to basic residues. Residues 954-1010 (APNTASPSISTSASASTGTTSASTTPASTTPASTTPASTTPASTSTASSQASQEGSS) show a composition bias toward low complexity. 2 stretches are compositionally biased toward polar residues: residues 1031–1040 (GTFSGSQAGR) and 1054–1065 (RRPSASSPNNTA). Residue serine 1057 is modified to Phosphoserine; by PKA.

Belongs to the JHDM1 histone demethylase family. JHDM1D subfamily. In terms of assembly, component of the PHF2-ARID5B complex, at least composed of PHF2 and ARID5B. Interacts with HNF4A and NR1H4. Interacts with RELA. In terms of processing, phosphorylated by PKA on specific serine residues, leading to the formation of an active lysine demethylase complex.

It localises to the nucleus. Its subcellular location is the nucleolus. It is found in the chromosome. The protein resides in the centromere. The protein localises to the kinetochore. The catalysed reaction is N(6),N(6)-dimethyl-L-lysyl(9)-[histone H3] + 2-oxoglutarate + O2 = N(6)-methyl-L-lysyl(9)-[histone H3] + formaldehyde + succinate + CO2. Its activity is regulated as follows. Enzymatically inactive by itself, and become active following phosphorylation by PKA. Its function is as follows. Lysine demethylase that demethylates both histones and non-histone proteins. Enzymatically inactive by itself, and becomes active following phosphorylation by PKA: forms a complex with ARID5B and mediates demethylation of methylated ARID5B. Demethylation of ARID5B leads to target the PHF2-ARID5B complex to target promoters, where PHF2 mediates demethylation of dimethylated 'Lys-9' of histone H3 (H3K9me2), followed by transcription activation of target genes. The PHF2-ARID5B complex acts as a coactivator of HNF4A in liver. PHF2 is recruited to trimethylated 'Lys-4' of histone H3 (H3K4me3) at rDNA promoters and promotes expression of rDNA. Involved in the activation of toll-like receptor 4 (TLR4)-target inflammatory genes in macrophages by catalyzing the demethylation of trimethylated histone H4 lysine 20 (H4K20me3) at the gene promoters. This chain is Lysine-specific demethylase PHF2 (Phf2), found in Mus musculus (Mouse).